Consider the following 515-residue polypeptide: MASGILVNVKEEVTCPICLELLTEPLSLPCGHSFCQACITANHKESMLYKEEERSCPVCRISYQPENIQPNRHVANIVEKLREVKLSPEEGQKVDHCARHGEKLLLFCQEDSKVICWLCERSQEHRGHHTFLMEEVAQEYHVKLQTALEMLRQKQQEAEKLEADTREEKASWKIQIDYDKTNVSADFEQLREILDWEESNELQNLEKEEEDILKSLTKSETEMVQQTQYMRELISDLEHRLQGSMMELLQGVDGIIKRIENMTLKKPKTFHKNQRRVFRAPDLKGMLDMFRELTDVRRYWVDVTLAPNNISHAVIAEDKRQVSYQNPQIMYQAPGSLFGSLTNFNYYTGVRGSQSITSGKLTNFNYCTGVLGSQSITSGKHYWEVDVSKKSAWILGVCAGFQPDATYNIEQNENYQPKYGYWVIGLQEGDKYSVFQDGSSHTPFAPFIVPLSVIICPDRVGVFVDYEACTVSFFNITNHGFLIYKFSQCSFSKPVFPYLNPRKCTVPMTLCSPSS.

N-acetylalanine is present on Ala2. The segment at Cys15–Arg60 adopts an RING-type zinc-finger fold. Phosphoserine is present on Ser87. The B box-type zinc finger occupies Gln92–Met133. The Zn(2+) site is built by Cys97, His100, Cys119, and His125. A coiled-coil region spans residues Ala137 to Gln225. Residues Phe187 to Asn200 are required for interaction with GABARAP and for autophagy. The B30.2/SPRY domain maps to Leu283–Ser515.

This sequence belongs to the TRIM/RBCC family. In terms of assembly, can form homodimers and homotrimers. In addition to lower-order dimerization, also exhibits a higher-order multimerization and both low- and high-order multimerizations are essential for its restriction activity. Interacts with BTBD1 and BTBD2. Interacts with PSMC4, PSMC5, PSMD7 and HSPA8/HSC70. Interacts (via B30.2/SPRY domain) with HSPA1A/B. Interacts with PSMC2, MAP3K7/TAK1, TAB2 and TAB3. Interacts with SQSTM1. Interacts with TRIM6 and TRIM34. Interacts with ULK1 (phosphorylated form), GABARAP, GABARAPL1, GABARAPL2, MAP1LC3A, MAP1LC3C and BECN1. Post-translationally, degraded in a proteasome-independent fashion in the absence of viral infection but in a proteasome-dependent fashion following exposure to restriction sensitive virus. In terms of processing, autoubiquitinated in a RING finger- and UBE2D2-dependent manner. Monoubiquitinated by TRIM21. Deubiquitinated by Yersinia YopJ. Ubiquitination may not lead to proteasomal degradation.

Its subcellular location is the cytoplasm. The protein resides in the nucleus. It catalyses the reaction S-ubiquitinyl-[E2 ubiquitin-conjugating enzyme]-L-cysteine + [acceptor protein]-L-lysine = [E2 ubiquitin-conjugating enzyme]-L-cysteine + N(6)-ubiquitinyl-[acceptor protein]-L-lysine.. Its pathway is protein modification; protein ubiquitination. Functionally, capsid-specific restriction factor that prevents infection from non-host-adapted retroviruses. Blocks viral replication early in the life cycle, after viral entry but before reverse transcription. In addition to acting as a capsid-specific restriction factor, also acts as a pattern recognition receptor that activates innate immune signaling in response to the retroviral capsid lattice. Binding to the viral capsid triggers its E3 ubiquitin ligase activity, and in concert with the heterodimeric ubiquitin conjugating enzyme complex UBE2V1-UBE2N (also known as UBC13-UEV1A complex) generates 'Lys-63'-linked polyubiquitin chains, which in turn are catalysts in the autophosphorylation of the MAP3K7/TAK1 complex (includes TAK1, TAB2, and TAB3). Activation of the MAP3K7/TAK1 complex by autophosphorylation results in the induction and expression of NF-kappa-B and MAPK-responsive inflammatory genes, thereby leading to an innate immune response in the infected cell. Restricts infection by human immunodeficiency virus type 1 (HIV-1), simian immunodeficiency virus (SIV-mac) and N-tropic murine leukemia viruse (N-MLV). Plays a role in regulating autophagy through activation of autophagy regulator BECN1 by causing its dissociation from its inhibitors BCL2 and TAB2. This Chlorocebus tantalus (Tantalus monkey) protein is Tripartite motif-containing protein 5 (TRIM5).